Consider the following 100-residue polypeptide: ATP synthase subunit c (100 aa).

2 helical membrane passes run 27 to 47 and 72 to 92; these read SVIA…IGMG and FIAL…TLIV.

This sequence belongs to the ATPase C chain family. F-type ATPases have 2 components, F(1) - the catalytic core - and F(0) - the membrane proton channel. F(1) has five subunits: alpha(3), beta(3), gamma(1), delta(1), epsilon(1). F(0) has three main subunits: a(1), b(2) and c(10-14). The alpha and beta chains form an alternating ring which encloses part of the gamma chain. F(1) is attached to F(0) by a central stalk formed by the gamma and epsilon chains, while a peripheral stalk is formed by the delta and b chains.

The protein resides in the cell inner membrane. Functionally, f(1)F(0) ATP synthase produces ATP from ADP in the presence of a proton or sodium gradient. F-type ATPases consist of two structural domains, F(1) containing the extramembraneous catalytic core and F(0) containing the membrane proton channel, linked together by a central stalk and a peripheral stalk. During catalysis, ATP synthesis in the catalytic domain of F(1) is coupled via a rotary mechanism of the central stalk subunits to proton translocation. Key component of the F(0) channel; it plays a direct role in translocation across the membrane. A homomeric c-ring of between 10-14 subunits forms the central stalk rotor element with the F(1) delta and epsilon subunits. The protein is ATP synthase subunit c of Campylobacter concisus (strain 13826).